Consider the following 20-residue polypeptide: LLSTLTDTSIKEAVATDKAP.

The protein is Unknown protein from 2D-PAGE of Nicotiana tabacum (Common tobacco).